The sequence spans 491 residues: Probable glycine dehydrogenase (decarboxylating) subunit 2 (491 aa).

Position 273 is an N6-(pyridoxal phosphate)lysine (K273).

This sequence belongs to the GcvP family. C-terminal subunit subfamily. In terms of assembly, the glycine cleavage system is composed of four proteins: P, T, L and H. In this organism, the P 'protein' is a heterodimer of two subunits. Pyridoxal 5'-phosphate serves as cofactor.

The catalysed reaction is N(6)-[(R)-lipoyl]-L-lysyl-[glycine-cleavage complex H protein] + glycine + H(+) = N(6)-[(R)-S(8)-aminomethyldihydrolipoyl]-L-lysyl-[glycine-cleavage complex H protein] + CO2. Functionally, the glycine cleavage system catalyzes the degradation of glycine. The P protein binds the alpha-amino group of glycine through its pyridoxal phosphate cofactor; CO(2) is released and the remaining methylamine moiety is then transferred to the lipoamide cofactor of the H protein. The polypeptide is Probable glycine dehydrogenase (decarboxylating) subunit 2 (Bacillus velezensis (strain DSM 23117 / BGSC 10A6 / LMG 26770 / FZB42) (Bacillus amyloliquefaciens subsp. plantarum)).